We begin with the raw amino-acid sequence, 385 residues long: Lysine 6-dehydrogenase (385 aa).

This sequence belongs to the saccharopine dehydrogenase family. In terms of assembly, homohexamer.

It carries out the reaction L-lysine + NAD(+) = L-1-piperideine-6-carboxylate + NH4(+) + NADH + 2 H(+). Its function is as follows. Catalyzes the oxidative deamination of L-lysine in the presence of NAD. Can also use (S)-(2-aminoethyl)-L-cysteine as a substrate, but more slowly. Can use both NAD and NADP but the preferred substrate is NAD. The sequence is that of Lysine 6-dehydrogenase (lysDH) from Geobacillus stearothermophilus (Bacillus stearothermophilus).